We begin with the raw amino-acid sequence, 63 residues long: Large ribosomal subunit protein uL29 (63 aa).

It belongs to the universal ribosomal protein uL29 family.

This Edwardsiella ictaluri (strain 93-146) protein is Large ribosomal subunit protein uL29.